The primary structure comprises 101 residues: MMLEHVLVLSAYLFSIGIYGLITSRNMVRALMCLELILNAVNINFVTFSDFFDNRQLKGDIFSIFVIAIAAAEAAIGPAIVSSIYRNRKSTRINQSNLLNK.

A run of 3 helical transmembrane segments spans residues 2-22 (MLEHVLVLSAYLFSIGIYGLI), 32-52 (MCLELILNAVNINFVTFSDFF), and 61-81 (IFSIFVIAIAAAEAAIGPAIV).

The protein belongs to the complex I subunit 4L family. In terms of assembly, NDH is composed of at least 16 different subunits, 5 of which are encoded in the nucleus.

The protein resides in the plastid. It localises to the chloroplast thylakoid membrane. The catalysed reaction is a plastoquinone + NADH + (n+1) H(+)(in) = a plastoquinol + NAD(+) + n H(+)(out). The enzyme catalyses a plastoquinone + NADPH + (n+1) H(+)(in) = a plastoquinol + NADP(+) + n H(+)(out). NDH shuttles electrons from NAD(P)H:plastoquinone, via FMN and iron-sulfur (Fe-S) centers, to quinones in the photosynthetic chain and possibly in a chloroplast respiratory chain. The immediate electron acceptor for the enzyme in this species is believed to be plastoquinone. Couples the redox reaction to proton translocation, and thus conserves the redox energy in a proton gradient. The sequence is that of NAD(P)H-quinone oxidoreductase subunit 4L, chloroplastic from Vitis vinifera (Grape).